A 271-amino-acid chain; its full sequence is 4-hydroxy-tetrahydrodipicolinate reductase (271 aa).

Residues 10–15 (GAGGRM), Glu36, 100–102 (GTT), and 124–127 (SGNM) contribute to the NAD(+) site. His157 functions as the Proton donor/acceptor in the catalytic mechanism. A (S)-2,3,4,5-tetrahydrodipicolinate-binding site is contributed by His158. The active-site Proton donor is the Lys161. 167-168 (GT) is a (S)-2,3,4,5-tetrahydrodipicolinate binding site.

It belongs to the DapB family.

It is found in the cytoplasm. The catalysed reaction is (S)-2,3,4,5-tetrahydrodipicolinate + NAD(+) + H2O = (2S,4S)-4-hydroxy-2,3,4,5-tetrahydrodipicolinate + NADH + H(+). It catalyses the reaction (S)-2,3,4,5-tetrahydrodipicolinate + NADP(+) + H2O = (2S,4S)-4-hydroxy-2,3,4,5-tetrahydrodipicolinate + NADPH + H(+). Its pathway is amino-acid biosynthesis; L-lysine biosynthesis via DAP pathway; (S)-tetrahydrodipicolinate from L-aspartate: step 4/4. Functionally, catalyzes the conversion of 4-hydroxy-tetrahydrodipicolinate (HTPA) to tetrahydrodipicolinate. The sequence is that of 4-hydroxy-tetrahydrodipicolinate reductase from Bradyrhizobium diazoefficiens (strain JCM 10833 / BCRC 13528 / IAM 13628 / NBRC 14792 / USDA 110).